A 513-amino-acid polypeptide reads, in one-letter code: ATP synthase subunit alpha (513 aa).

169–176 (GDRQTGKT) is a binding site for ATP.

This sequence belongs to the ATPase alpha/beta chains family. As to quaternary structure, F-type ATPases have 2 components, CF(1) - the catalytic core - and CF(0) - the membrane proton channel. CF(1) has five subunits: alpha(3), beta(3), gamma(1), delta(1), epsilon(1). CF(0) has three main subunits: a(1), b(2) and c(9-12). The alpha and beta chains form an alternating ring which encloses part of the gamma chain. CF(1) is attached to CF(0) by a central stalk formed by the gamma and epsilon chains, while a peripheral stalk is formed by the delta and b chains.

It is found in the cell inner membrane. It carries out the reaction ATP + H2O + 4 H(+)(in) = ADP + phosphate + 5 H(+)(out). Its function is as follows. Produces ATP from ADP in the presence of a proton gradient across the membrane. The alpha chain is a regulatory subunit. This chain is ATP synthase subunit alpha, found in Enterobacter sp. (strain 638).